Reading from the N-terminus, the 128-residue chain is MTRISRGYIARRRRRKTSLVVSSSGASLSKLITQQEIKALASSDRDRDRQKRDFRCLWITRINSVIREGWVSYSYSYSKFIHDLYKRQLLLNRKILAQIAIANKNFLYLISNQILKSEVNWKESAGVI.

This sequence belongs to the bacterial ribosomal protein bL20 family.

It localises to the plastid. The protein localises to the chloroplast. In terms of biological role, binds directly to 23S ribosomal RNA and is necessary for the in vitro assembly process of the 50S ribosomal subunit. It is not involved in the protein synthesizing functions of that subunit. This chain is Large ribosomal subunit protein bL20c, found in Trachelium caeruleum (Blue throatwort).